The sequence spans 193 residues: Putative 3-methyladenine DNA glycosylase (193 aa).

The protein belongs to the DNA glycosylase MPG family.

This is Putative 3-methyladenine DNA glycosylase from Nitrosospira multiformis (strain ATCC 25196 / NCIMB 11849 / C 71).